The primary structure comprises 760 residues: MOXD1 homolog 2 (760 aa).

Residues 1–34 (MAHPRKAVATPATLQLGPPAQTAQSPAATLRHSR) form a disordered region. A compositionally biased stretch (low complexity) spans 18–34 (PPAQTAQSPAATLRHSR). Residues 47–67 (CFISCHTFNLFLLLLLLASGV) traverse the membrane as a helical segment. 3 N-linked (GlcNAc...) asparagine glycosylation sites follow: Asn-78, Asn-198, and Asn-223. A DOMON domain is found at 117–233 (DDFRILWQII…DTMRLLYMYH (117 aa)). Intrachain disulfides connect Cys-339-Cys-367, Cys-467-Cys-581, and Cys-543-Cys-565. Asn-668 carries N-linked (GlcNAc...) asparagine glycosylation. The interval 678-701 (RCKPKRPLAPPTERTAPPPASDLS) is disordered. The chain crosses the membrane as a helical span at residues 740-760 (FISCLLWLGASSWWLLLMLRT).

It belongs to the copper type II ascorbate-dependent monooxygenase family.

Its subcellular location is the membrane. In Drosophila melanogaster (Fruit fly), this protein is MOXD1 homolog 2 (olf413).